The sequence spans 547 residues: Chaperonin GroEL (547 aa).

ATP contacts are provided by residues 30 to 33 (TLGP), K51, 87 to 91 (DGTTT), G415, and D496. Residues 527–547 (SDKAEPMPMRGGMGGMGGMDF) are disordered. The span at 537 to 547 (GGMGGMGGMDF) shows a compositional bias: gly residues.

It belongs to the chaperonin (HSP60) family. As to quaternary structure, forms a cylinder of 14 subunits composed of two heptameric rings stacked back-to-back. Interacts with the co-chaperonin GroES.

Its subcellular location is the cytoplasm. The catalysed reaction is ATP + H2O + a folded polypeptide = ADP + phosphate + an unfolded polypeptide.. Together with its co-chaperonin GroES, plays an essential role in assisting protein folding. The GroEL-GroES system forms a nano-cage that allows encapsulation of the non-native substrate proteins and provides a physical environment optimized to promote and accelerate protein folding. The sequence is that of Chaperonin GroEL from Rickettsia africae (strain ESF-5).